We begin with the raw amino-acid sequence, 397 residues long: L-cysteine desulfidase (397 aa).

The Proton acceptor role is filled by Cys-23. 3 residues coordinate [4Fe-4S] cluster: Cys-288, Cys-330, and Cys-337.

The protein belongs to the L-cysteine desulfidase family. In terms of assembly, homotrimer. Requires [4Fe-4S] cluster as cofactor.

The catalysed reaction is L-cysteine + H2O = hydrogen sulfide + pyruvate + NH4(+) + H(+). Catalyzes the cleavage of L-cysteine to form 2-aminoprop-2-enoate and sulfide. The former then spontaneously hydrolyzes to pyruvate and NH(3). May be responsible for the production of sulfide required for the biosynthesis of iron-sulfur centers in this archaea. The protein is L-cysteine desulfidase of Methanococcus maripaludis (strain C5 / ATCC BAA-1333).